Consider the following 473-residue polypeptide: Sorting nexin-17 (473 aa).

The PX domain maps to 1-108; sequence MHFSIPETEV…SFLRKAQQET (108 aa). The a 1,2-diacyl-sn-glycero-3-phospho-(1D-myo-inositol-3-phosphate) site is built by R35, S37, K61, and R74. The region spanning 114 to 205 is the Ras-associating domain; that stretch reads EEVQLEIYLS…YRIILRKSYW (92 aa). The FERM-like stretch occupies residues 114–433; it reads EEVQLEIYLS…DPNREQVVKL (320 aa). Residues 269-433 are PTB-like F3 module; the sequence is GYIKFDPCIT…DPNREQVVKL (165 aa). Residues 391-431 form a disordered region; sequence SIKKQMQKKRLNGSLQRSDSQQAVKSPPILDSPDPNREQVV. Over residues 403–414 the composition is skewed to polar residues; sequence GSLQRSDSQQAV.

This sequence belongs to the sorting nexin family. In terms of assembly, monomer. Interacts with CCDC22, CCDC93, DSCR3 and VPS35L; the interaction with DSCR3 is direct and associates SNX17 with the retriever and CCC complexes.

The protein localises to the cytoplasm. It is found in the early endosome. The protein resides in the cytoplasmic vesicle membrane. In terms of biological role, critical regulator of endosomal recycling of numerous surface proteins, including integrins, signaling receptor and channels. Binds to NPxY sequences in the cytoplasmic tails of target cargos. Associates with retriever and CCC complexes to prevent lysosomal degradation and promote cell surface recycling of numerous cargos such as integrins ITGB1, ITGB5 and their associated alpha subunits. Also required for maintenance of normal cell surface levels of APP and LRP1. Interacts with membranes containing phosphatidylinositol 3-phosphate (PtdIns(3P)). This is Sorting nexin-17 (snx17) from Danio rerio (Zebrafish).